Consider the following 332-residue polypeptide: Transaldolase (332 aa).

Lys-135 acts as the Schiff-base intermediate with substrate in catalysis.

This sequence belongs to the transaldolase family. Type 1 subfamily. Homodimer.

The protein resides in the cytoplasm. It catalyses the reaction D-sedoheptulose 7-phosphate + D-glyceraldehyde 3-phosphate = D-erythrose 4-phosphate + beta-D-fructose 6-phosphate. Its pathway is carbohydrate degradation; pentose phosphate pathway; D-glyceraldehyde 3-phosphate and beta-D-fructose 6-phosphate from D-ribose 5-phosphate and D-xylulose 5-phosphate (non-oxidative stage): step 2/3. In terms of biological role, transaldolase is important for the balance of metabolites in the pentose-phosphate pathway. The protein is Transaldolase of Prochlorococcus marinus (strain NATL1A).